The sequence spans 317 residues: Methionyl-tRNA formyltransferase (317 aa).

Position 111–114 (111–114 (SLLP)) interacts with (6S)-5,6,7,8-tetrahydrofolate.

The protein belongs to the Fmt family.

The enzyme catalyses L-methionyl-tRNA(fMet) + (6R)-10-formyltetrahydrofolate = N-formyl-L-methionyl-tRNA(fMet) + (6S)-5,6,7,8-tetrahydrofolate + H(+). Its function is as follows. Attaches a formyl group to the free amino group of methionyl-tRNA(fMet). The formyl group appears to play a dual role in the initiator identity of N-formylmethionyl-tRNA by promoting its recognition by IF2 and preventing the misappropriation of this tRNA by the elongation apparatus. This is Methionyl-tRNA formyltransferase from Chlorobium phaeobacteroides (strain BS1).